The sequence spans 237 residues: Protein GrpE (237 aa).

Disordered stretches follow at residues 1–52 (MSGD…RLQQ) and 200–237 (KVSM…QPGV). Positions 27-40 (ASINSDEGQSSAQS) are enriched in polar residues. Positions 204–218 (GPGPQSGASPSSAQP) are enriched in low complexity.

This sequence belongs to the GrpE family. Homodimer.

It localises to the cytoplasm. Its function is as follows. Participates actively in the response to hyperosmotic and heat shock by preventing the aggregation of stress-denatured proteins, in association with DnaK and GrpE. It is the nucleotide exchange factor for DnaK and may function as a thermosensor. Unfolded proteins bind initially to DnaJ; upon interaction with the DnaJ-bound protein, DnaK hydrolyzes its bound ATP, resulting in the formation of a stable complex. GrpE releases ADP from DnaK; ATP binding to DnaK triggers the release of the substrate protein, thus completing the reaction cycle. Several rounds of ATP-dependent interactions between DnaJ, DnaK and GrpE are required for fully efficient folding. This Prochlorococcus marinus (strain MIT 9313) protein is Protein GrpE.